We begin with the raw amino-acid sequence, 506 residues long: Glutamate--tRNA ligase (506 aa).

The short motif at 23 to 33 is the 'HIGH' region element; that stretch reads PSPTGTPHVGL. The short motif at 267 to 271 is the 'KMSKS' region element; the sequence is KLSKR. Lysine 270 serves as a coordination point for ATP.

This sequence belongs to the class-I aminoacyl-tRNA synthetase family. Glutamate--tRNA ligase type 1 subfamily. In terms of assembly, monomer.

The protein localises to the cytoplasm. The catalysed reaction is tRNA(Glu) + L-glutamate + ATP = L-glutamyl-tRNA(Glu) + AMP + diphosphate. Catalyzes the attachment of glutamate to tRNA(Glu) in a two-step reaction: glutamate is first activated by ATP to form Glu-AMP and then transferred to the acceptor end of tRNA(Glu). This Clavibacter michiganensis subsp. michiganensis (strain NCPPB 382) protein is Glutamate--tRNA ligase.